Consider the following 438-residue polypeptide: C4-dicarboxylate transport protein 1 (438 aa).

8 helical membrane-spanning segments follow: residues 20 to 42, 57 to 77, 90 to 112, 160 to 179, 192 to 214, 229 to 251, 324 to 346, and 361 to 383; these read LYVQ…PSVA, LIKM…IAHI, ALFY…GNLV, VLQV…ALGK, AHAV…FGAM, LIGL…LGLI, LFIA…LLVA, and FITL…AIVF.

Belongs to the dicarboxylate/amino acid:cation symporter (DAACS) (TC 2.A.23) family.

The protein localises to the cell inner membrane. In terms of biological role, responsible for the transport of dicarboxylates such as succinate, fumarate, and malate from the periplasm across the membrane. This is C4-dicarboxylate transport protein 1 from Bradyrhizobium diazoefficiens (strain JCM 10833 / BCRC 13528 / IAM 13628 / NBRC 14792 / USDA 110).